Reading from the N-terminus, the 137-residue chain is Nucleoside diphosphate kinase (137 aa).

6 residues coordinate ATP: lysine 9, phenylalanine 57, arginine 85, threonine 91, arginine 102, and asparagine 112. Residue histidine 115 is the Pros-phosphohistidine intermediate of the active site.

This sequence belongs to the NDK family. Homotetramer. The cofactor is Mg(2+).

It is found in the cytoplasm. The catalysed reaction is a 2'-deoxyribonucleoside 5'-diphosphate + ATP = a 2'-deoxyribonucleoside 5'-triphosphate + ADP. It carries out the reaction a ribonucleoside 5'-diphosphate + ATP = a ribonucleoside 5'-triphosphate + ADP. In terms of biological role, major role in the synthesis of nucleoside triphosphates other than ATP. The ATP gamma phosphate is transferred to the NDP beta phosphate via a ping-pong mechanism, using a phosphorylated active-site intermediate. The chain is Nucleoside diphosphate kinase from Pelobacter propionicus (strain DSM 2379 / NBRC 103807 / OttBd1).